Here is a 208-residue protein sequence, read N- to C-terminus: Heat shock protein 26 (208 aa).

3 positions are modified to phosphoserine: serine 44, serine 52, and serine 58. One can recognise a sHSP domain in the interval 71–179 (ANRNDIHWPA…KSKERIIQIQ (109 aa)). Residues 187 to 208 (NVKANESEVKGKENGAPNGKDK) are disordered. A compositionally biased stretch (basic and acidic residues) spans 191–208 (NESEVKGKENGAPNGKDK).

This sequence belongs to the small heat shock protein (HSP20) family.

This Drosophila melanogaster (Fruit fly) protein is Heat shock protein 26 (Hsp26).